We begin with the raw amino-acid sequence, 286 residues long: Bifunctional protein FolD (286 aa).

NADP(+) contacts are provided by residues 166–168 (GAS) and I232.

Belongs to the tetrahydrofolate dehydrogenase/cyclohydrolase family. Homodimer.

It carries out the reaction (6R)-5,10-methylene-5,6,7,8-tetrahydrofolate + NADP(+) = (6R)-5,10-methenyltetrahydrofolate + NADPH. The enzyme catalyses (6R)-5,10-methenyltetrahydrofolate + H2O = (6R)-10-formyltetrahydrofolate + H(+). The protein operates within one-carbon metabolism; tetrahydrofolate interconversion. Catalyzes the oxidation of 5,10-methylenetetrahydrofolate to 5,10-methenyltetrahydrofolate and then the hydrolysis of 5,10-methenyltetrahydrofolate to 10-formyltetrahydrofolate. The sequence is that of Bifunctional protein FolD from Shewanella piezotolerans (strain WP3 / JCM 13877).